The following is a 353-amino-acid chain: Ornithine racemase (353 aa).

The active-site Proton acceptor is the Lys35. N6-(pyridoxal phosphate)lysine is present on Lys35. Arg128 contributes to the substrate binding site.

The protein belongs to the alanine racemase family. As to quaternary structure, homodimer. The cofactor is pyridoxal 5'-phosphate.

It catalyses the reaction L-ornithine = D-ornithine. Its function is as follows. Involved in the ornithine fermentation pathway. Catalyzes the conversion of L-ornithine to D-ornithine. OR could also racemize basic amino acids such as lysine and arginine. Serine, asparagine and alanine could be also converted by OR, but at a lower rate. This is Ornithine racemase from Acetoanaerobium sticklandii (strain ATCC 12662 / DSM 519 / JCM 1433 / CCUG 9281 / NCIMB 10654 / HF) (Clostridium sticklandii).